A 216-amino-acid chain; its full sequence is Small ribosomal subunit protein uS3 (216 aa).

The region spanning 24–93 is the KH type-2 domain; sequence IKEFLEYRLA…NPQIDVIDVS (70 aa).

Belongs to the universal ribosomal protein uS3 family. As to quaternary structure, part of the 30S ribosomal subunit.

Its function is as follows. Binds the lower part of the 30S subunit head. This is Small ribosomal subunit protein uS3 from Pyrobaculum calidifontis (strain DSM 21063 / JCM 11548 / VA1).